We begin with the raw amino-acid sequence, 963 residues long: Importin-13 (963 aa).

HEAT repeat units follow at residues 24 to 54 (ENVEKALHQLYYDPNIENKNLAQKWLMQAQA), 56 to 88 (PQAWHFSWQLLQPDKVPEIQYFGASALHIKISR), 95 to 135 (TDQY…LSMM), 142 to 179 (AVADMVRLFQAEDSPVDSQGRCLALLELLTVLPEEFQT), 194 to 231 (LAVECGAVFPLLEQLLQQPSSPSCVRQKVLKCFSSWVQ), 236 to 268 (LQDCEALIQAAFAALQDSELFDSSVEAIVNAIS), 276 to 325 (VNTL…ALLD), 330 to 372 (WQSF…DDIL), 375 to 438 (EAEK…YEML), 440 to 476 (AELLSNLYDKLGRLLTSSEEPYSWQHTEALLYGFQSI), 487 to 522 (VVPGLIGLIPRISISNVQLADTVMFTIGALSEWLAD), 524 to 558 (PVMINSVLPLVLHALGNPELSISSVSTLKKICREC), 562 to 600 (LPPYAANIVAVSQDVLMKQIHKTSQCMWLMQALGFLLSA), 603 to 648 (VEEI…SNLF), 676 to 716 (PVVV…VKTL), 720 to 754 (FAPMVPQLCEMLGRMYSTIPQASALDLTRQLVHIF), 761 to 803 (FPPI…ALKR), 815 to 845 (VKAVFQCAVLALKFPEAPTVKASCGFFTELL), 860 to 893 (EDGRMLLIAVLEAIGGQASRSLMDCFADILFALN), and 897 to 931 (FSLLSVWIKEALQAPGFPSARLSPEQKDTFSQQIL). An Importin N-terminal domain is found at 45 to 111 (AQKWLMQAQA…KAQLFTQITR (67 aa)).

Belongs to the importin beta family. In terms of assembly, interacts with UBC9, RAN, RBM8A, eIF-1A and PAX6.

The protein resides in the cytoplasm. It is found in the nucleus. Its function is as follows. Functions in nuclear protein import as nuclear transport receptor. Serves as receptor for nuclear localization signals (NLS) in cargo substrates. Is thought to mediate docking of the importin/substrate complex to the nuclear pore complex (NPC) through binding to nucleoporin and the complex is subsequently translocated through the pore by an energy requiring, Ran-dependent mechanism. At the nucleoplasmic side of the NPC, Ran binds to the importin, the importin/substrate complex dissociates and importin is re-exported from the nucleus to the cytoplasm where GTP hydrolysis releases Ran. The directionality of nuclear import is thought to be conferred by an asymmetric distribution of the GTP- and GDP-bound forms of Ran between the cytoplasm and nucleus. Mediates the nuclear import of UBC9, the RBM8A/MAGOH complex, PAX6 and probably other members of the paired homeobox family. Also mediates nuclear export of eIF-1A, and the cytoplasmic release of eIF-1A is triggered by the loading of import substrates onto IPO13. The polypeptide is Importin-13 (IPO13) (Bos taurus (Bovine)).